Consider the following 587-residue polypeptide: D-lactate dehydrogenase [cytochrome] 1, mitochondrial (587 aa).

An FAD-binding PCMH-type domain is found at 146–327; it reads SPEQRPRIIL…TEATVKCHVK (182 aa).

This sequence belongs to the FAD-binding oxidoreductase/transferase type 4 family. It depends on FAD as a cofactor.

The protein resides in the mitochondrion inner membrane. It carries out the reaction (R)-lactate + 2 Fe(III)-[cytochrome c] = 2 Fe(II)-[cytochrome c] + pyruvate + 2 H(+). Catalyzes the stereospecific oxidation of D-lactate to pyruvate. In Saccharomyces cerevisiae (strain ATCC 204508 / S288c) (Baker's yeast), this protein is D-lactate dehydrogenase [cytochrome] 1, mitochondrial.